The following is a 107-amino-acid chain: Iron-binding protein IscA (107 aa).

Residues C35, C99, and C101 each coordinate Fe cation.

This sequence belongs to the HesB/IscA family. As to quaternary structure, homodimer; may form tetramers and higher multimers. Fe cation is required as a cofactor.

Its function is as follows. Is able to transfer iron-sulfur clusters to apo-ferredoxin. Multiple cycles of [2Fe2S] cluster formation and transfer are observed, suggesting that IscA acts catalytically. Recruits intracellular free iron so as to provide iron for the assembly of transient iron-sulfur cluster in IscU in the presence of IscS, L-cysteine and the thioredoxin reductase system TrxA/TrxB. This chain is Iron-binding protein IscA, found in Proteus mirabilis (strain HI4320).